A 261-amino-acid chain; its full sequence is 1,6-dihydroxycyclohexa-2,4-diene-1-carboxylate dehydrogenase (261 aa).

13 to 37 lines the NAD(+) pocket; sequence IVTGAAQGIGRGVALRIAQEGGCLI. Residue Ser-145 participates in substrate binding. Tyr-156 serves as the catalytic Proton acceptor.

This sequence belongs to the short-chain dehydrogenases/reductases (SDR) family. As to quaternary structure, homodimer.

It catalyses the reaction (1R,6S)-1,6-dihydroxycyclohexa-2,4-diene-1-carboxylate + NAD(+) = catechol + CO2 + NADH. Its pathway is aromatic compound metabolism; benzoate degradation via hydroxylation; catechol from benzoate: step 2/2. Its function is as follows. Degradation of 2-hydro-1,2-dihydroxy benzoate (DHB) to catechol. This Acinetobacter baylyi (strain ATCC 33305 / BD413 / ADP1) protein is 1,6-dihydroxycyclohexa-2,4-diene-1-carboxylate dehydrogenase (benD).